Here is a 192-residue protein sequence, read N- to C-terminus: Potassium-transporting ATPase KdpC subunit (192 aa).

Residues 14 to 34 (LTGVLVVLCGLIYPAMVTGIA) traverse the membrane as a helical segment.

It belongs to the KdpC family. As to quaternary structure, the system is composed of three essential subunits: KdpA, KdpB and KdpC.

It is found in the cell membrane. Functionally, part of the high-affinity ATP-driven potassium transport (or Kdp) system, which catalyzes the hydrolysis of ATP coupled with the electrogenic transport of potassium into the cytoplasm. This subunit acts as a catalytic chaperone that increases the ATP-binding affinity of the ATP-hydrolyzing subunit KdpB by the formation of a transient KdpB/KdpC/ATP ternary complex. The chain is Potassium-transporting ATPase KdpC subunit from Bacillus cytotoxicus (strain DSM 22905 / CIP 110041 / 391-98 / NVH 391-98).